A 500-amino-acid polypeptide reads, in one-letter code: Lysine--tRNA ligase (500 aa).

Mg(2+)-binding residues include glutamate 411 and glutamate 418.

This sequence belongs to the class-II aminoacyl-tRNA synthetase family. In terms of assembly, homodimer. The cofactor is Mg(2+).

The protein resides in the cytoplasm. The enzyme catalyses tRNA(Lys) + L-lysine + ATP = L-lysyl-tRNA(Lys) + AMP + diphosphate. This is Lysine--tRNA ligase from Actinobacillus pleuropneumoniae serotype 7 (strain AP76).